The following is a 202-amino-acid chain: Dephospho-CoA kinase (202 aa).

Positions 6–202 constitute a DPCK domain; that stretch reads KVSITGDLSS…EYFYALKGAL (197 aa). ATP is bound at residue 14 to 19; the sequence is SSGKTE.

The protein belongs to the CoaE family.

The protein resides in the cytoplasm. The enzyme catalyses 3'-dephospho-CoA + ATP = ADP + CoA + H(+). Its pathway is cofactor biosynthesis; coenzyme A biosynthesis; CoA from (R)-pantothenate: step 5/5. Functionally, catalyzes the phosphorylation of the 3'-hydroxyl group of dephosphocoenzyme A to form coenzyme A. The chain is Dephospho-CoA kinase from Chlamydia felis (strain Fe/C-56) (Chlamydophila felis).